The chain runs to 456 residues: Phosphomannomutase (456 aa).

Residue Ser98 is the Phosphoserine intermediate of the active site. Mg(2+) contacts are provided by Ser98, Asp245, Asp247, and Asp249.

The protein belongs to the phosphohexose mutase family. It depends on Mg(2+) as a cofactor.

It carries out the reaction alpha-D-mannose 1-phosphate = D-mannose 6-phosphate. It participates in nucleotide-sugar biosynthesis; GDP-alpha-D-mannose biosynthesis; alpha-D-mannose 1-phosphate from D-fructose 6-phosphate: step 2/2. The protein operates within bacterial outer membrane biogenesis; LPS O-antigen biosynthesis. In terms of biological role, involved in GDP-mannose biosynthesis which serves as the activated sugar nucleotide precursor for mannose residues in cell surface polysaccharides. This enzyme participates in synthesis of the LPS O antigen. This Salmonella montevideo protein is Phosphomannomutase (manB).